Here is a 136-residue protein sequence, read N- to C-terminus: Large ribosomal subunit protein uL16c (136 aa).

Belongs to the universal ribosomal protein uL16 family. As to quaternary structure, part of the 50S ribosomal subunit.

The protein resides in the plastid. The protein localises to the chloroplast. The sequence is that of Large ribosomal subunit protein uL16c from Phaseolus angularis (Azuki bean).